The following is a 208-amino-acid chain: Protein-L-isoaspartate O-methyltransferase (208 aa).

The active site involves Ser-59.

Belongs to the methyltransferase superfamily. L-isoaspartyl/D-aspartyl protein methyltransferase family.

It localises to the cytoplasm. It catalyses the reaction [protein]-L-isoaspartate + S-adenosyl-L-methionine = [protein]-L-isoaspartate alpha-methyl ester + S-adenosyl-L-homocysteine. Functionally, catalyzes the methyl esterification of L-isoaspartyl residues in peptides and proteins that result from spontaneous decomposition of normal L-aspartyl and L-asparaginyl residues. It plays a role in the repair and/or degradation of damaged proteins. The sequence is that of Protein-L-isoaspartate O-methyltransferase from Escherichia coli (strain K12 / MC4100 / BW2952).